The chain runs to 425 residues: Elongation factor 1-alpha (425 aa).

The 217-residue stretch at 5–221 (KPHMNLAVIG…DTFKEPSKPT (217 aa)) folds into the tr-type G domain. The interval 14–21 (GHIDHGKS) is G1. A GTP-binding site is contributed by 14-21 (GHIDHGKS). Ser-21 provides a ligand contact to Mg(2+). The G2 stretch occupies residues 70–74 (GITID). The G3 stretch occupies residues 91–94 (DCPG). GTP-binding positions include 91 to 95 (DCPGH) and 146 to 149 (NKMD). Residues 146 to 149 (NKMD) form a G4 region. Residues 185–187 (SSL) are G5.

The protein belongs to the TRAFAC class translation factor GTPase superfamily. Classic translation factor GTPase family. EF-Tu/EF-1A subfamily.

It is found in the cytoplasm. It carries out the reaction GTP + H2O = GDP + phosphate + H(+). Its function is as follows. GTP hydrolase that promotes the GTP-dependent binding of aminoacyl-tRNA to the A-site of ribosomes during protein biosynthesis. The chain is Elongation factor 1-alpha from Methanoregula boonei (strain DSM 21154 / JCM 14090 / 6A8).